The following is a 319-amino-acid chain: ATP-dependent 6-phosphofructokinase (319 aa).

Glycine 11 is a binding site for ATP. 21 to 25 (RAVVR) lines the ADP pocket. Residues 72–73 (RC) and 102–105 (GDGS) contribute to the ATP site. Position 103 (aspartate 103) interacts with Mg(2+). Position 125-127 (125-127 (TID)) interacts with substrate. Aspartate 127 acts as the Proton acceptor in catalysis. Residue arginine 154 participates in ADP binding. Substrate is bound by residues arginine 162 and 169 to 171 (MGR). ADP-binding positions include 185 to 187 (GAE), arginine 211, and 213 to 215 (KKH). Substrate contacts are provided by residues glutamate 222, arginine 243, and 249–252 (HIQR).

It belongs to the phosphofructokinase type A (PFKA) family. ATP-dependent PFK group I subfamily. Prokaryotic clade 'B1' sub-subfamily. In terms of assembly, homotetramer. Requires Mg(2+) as cofactor.

Its subcellular location is the cytoplasm. The enzyme catalyses beta-D-fructose 6-phosphate + ATP = beta-D-fructose 1,6-bisphosphate + ADP + H(+). It participates in carbohydrate degradation; glycolysis; D-glyceraldehyde 3-phosphate and glycerone phosphate from D-glucose: step 3/4. Allosterically activated by ADP and other diphosphonucleosides, and allosterically inhibited by phosphoenolpyruvate. Functionally, catalyzes the phosphorylation of D-fructose 6-phosphate to fructose 1,6-bisphosphate by ATP, the first committing step of glycolysis. This Bacillus licheniformis (strain ATCC 14580 / DSM 13 / JCM 2505 / CCUG 7422 / NBRC 12200 / NCIMB 9375 / NCTC 10341 / NRRL NRS-1264 / Gibson 46) protein is ATP-dependent 6-phosphofructokinase.